A 377-amino-acid polypeptide reads, in one-letter code: O-phospho-L-seryl-tRNA:Cys-tRNA synthase (377 aa).

Pyridoxal 5'-phosphate-binding positions include A83–R84, N188, and S211–H213. K214 is subject to N6-(pyridoxal phosphate)lysine.

The protein belongs to the SepCysS family. As to quaternary structure, homodimer. Interacts with SepRS. Pyridoxal 5'-phosphate is required as a cofactor.

It catalyses the reaction O-phospho-L-seryl-tRNA(Cys) + hydrogen sulfide + H(+) = L-cysteinyl-tRNA(Cys) + phosphate. Functionally, converts O-phospho-L-seryl-tRNA(Cys) (Sep-tRNA(Cys)) to L-cysteinyl-tRNA(Cys) (Cys-tRNA(Cys)). The chain is O-phospho-L-seryl-tRNA:Cys-tRNA synthase from Methanothermobacter thermautotrophicus (strain ATCC 29096 / DSM 1053 / JCM 10044 / NBRC 100330 / Delta H) (Methanobacterium thermoautotrophicum).